The sequence spans 250 residues: NAD-dependent protein deacetylase 2 (250 aa).

The 247-residue stretch at 4–250 folds into the Deacetylase sirtuin-type domain; the sequence is MDSKNLFKKA…LRNIWNLIKS (247 aa). Residues Ala-29, Thr-33, Phe-40, Arg-41, Gln-107, Ile-109, Asp-110, and His-125 each coordinate NAD(+). Phe-40 lines the nicotinamide pocket. Nicotinamide is bound by residues Ile-109 and Asp-110. His-125 (proton acceptor) is an active-site residue. Residues Cys-133, Cys-136, Cys-158, and Cys-161 each coordinate Zn(2+). Ser-198, Ser-199, and Asn-219 together coordinate NAD(+).

The protein belongs to the sirtuin family. Class U subfamily. The cofactor is Zn(2+).

The protein resides in the cytoplasm. It carries out the reaction N(6)-acetyl-L-lysyl-[protein] + NAD(+) + H2O = 2''-O-acetyl-ADP-D-ribose + nicotinamide + L-lysyl-[protein]. Functionally, NAD-dependent protein deacetylase which modulates the activities of several enzymes which are inactive in their acetylated form. This is NAD-dependent protein deacetylase 2 from Caldanaerobacter subterraneus subsp. tengcongensis (strain DSM 15242 / JCM 11007 / NBRC 100824 / MB4) (Thermoanaerobacter tengcongensis).